The following is a 122-amino-acid chain: Acyl carrier protein 1, mitochondrial (122 aa).

A mitochondrion-targeting transit peptide spans 1 to 34 (MALRNAILRHLRVPVQTLGLNQSKIGFLGTIRSF). The Carrier domain occupies 44–119 (EAVVDRVLDV…LAIEYVYNHP (76 aa)). Position 79 is an O-(pantetheine 4'-phosphoryl)serine (serine 79).

The protein belongs to the acyl carrier protein (ACP) family. Complex I is composed of at least 49 different subunits. 4'-phosphopantetheine is transferred from CoA to a specific serine of the apo-ACP-like protein.

It is found in the mitochondrion. Its pathway is lipid metabolism; fatty acid biosynthesis. Its function is as follows. Carrier of the growing fatty acid chain in fatty acid biosynthesis. May be involved in the synthesis of short and medium chain fatty acids. Accessory and non-catalytic subunit of the mitochondrial membrane respiratory chain NADH dehydrogenase (Complex I), which functions in the transfer of electrons from NADH to the respiratory chain. This chain is Acyl carrier protein 1, mitochondrial (MTACP1), found in Arabidopsis thaliana (Mouse-ear cress).